We begin with the raw amino-acid sequence, 197 residues long: MKMDADSSGTQHRDSRGSRSRSRREREYHGRSSERDSRKKEHKIPYFADEVREQDRLRRLRQRAHQSTRRTRSRSRSQSSIRESRHRRHRQRSRSRNRSRSRSSERKRRQRSRSRSSERRRRQRSPHRYNPPPKIINYYVQVPPQDFYGMSGMQQSFGYQRLPRPPPFPPAPYRYRQRPPFIGVPRFGYRNAGRPPY.

Basic and acidic residues-rich tracts occupy residues 1-17 (MKMD…DSRG) and 24-39 (RERE…DSRK). Disordered stretches follow at residues 1–136 (MKMD…PKII) and 158–197 (GYQR…RPPY). Basic residues-rich tracts occupy residues 58–75 (RRLR…RSRS) and 84–127 (SRHR…RSPH). Over residues 163–172 (PRPPPFPPAP) the composition is skewed to pro residues.

The protein resides in the nucleus speckle. Functionally, member of the regulatory pathway controlling female somatic sexual differentiation, regulated by Sxl. Activates dsx female-specific splicing by promoting the formation of a splicing enhancer complex which consists of tra, tra2 and sr proteins. Together with tra-2, plays a role in switching fru splicing from the male-specific pattern to the female-specific pattern through activation of the female-specific fru 5'-splice site. No known function in males. The sequence is that of Female-specific protein transformer (tra) from Drosophila melanogaster (Fruit fly).